We begin with the raw amino-acid sequence, 557 residues long: Formate--tetrahydrofolate ligase (557 aa).

Position 65-72 (65-72 (TPAGEGKT)) interacts with ATP.

Belongs to the formate--tetrahydrofolate ligase family.

The enzyme catalyses (6S)-5,6,7,8-tetrahydrofolate + formate + ATP = (6R)-10-formyltetrahydrofolate + ADP + phosphate. It participates in one-carbon metabolism; tetrahydrofolate interconversion. The sequence is that of Formate--tetrahydrofolate ligase from Methylobacterium radiotolerans (strain ATCC 27329 / DSM 1819 / JCM 2831 / NBRC 15690 / NCIMB 10815 / 0-1).